The following is a 282-amino-acid chain: Shikimate dehydrogenase (NADP(+)) (282 aa).

Shikimate-binding positions include serine 15–serine 17 and threonine 62. Lysine 66 functions as the Proton acceptor in the catalytic mechanism. The shikimate site is built by asparagine 87 and aspartate 103. Residues glycine 127–alanine 131, asparagine 151–lysine 156, and methionine 220 each bind NADP(+). Position 222 (tyrosine 222) interacts with shikimate. Residue glycine 244 coordinates NADP(+).

It belongs to the shikimate dehydrogenase family. In terms of assembly, homodimer.

The enzyme catalyses shikimate + NADP(+) = 3-dehydroshikimate + NADPH + H(+). The protein operates within metabolic intermediate biosynthesis; chorismate biosynthesis; chorismate from D-erythrose 4-phosphate and phosphoenolpyruvate: step 4/7. Functionally, involved in the biosynthesis of the chorismate, which leads to the biosynthesis of aromatic amino acids. Catalyzes the reversible NADPH linked reduction of 3-dehydroshikimate (DHSA) to yield shikimate (SA). The chain is Shikimate dehydrogenase (NADP(+)) from Shewanella baltica (strain OS195).